Reading from the N-terminus, the 166-residue chain is Keratin, type II cytoskeletal 68 kDa, component IB (166 aa).

An IF rod domain is found at 1-41 (EAKDDLARLLRDYQDAMNVKLALDVEIATYRKLLEGEECRM). The interval 1–41 (EAKDDLARLLRDYQDAMNVKLALDVEIATYRKLLEGEECRM) is coil 2B. The tail stretch occupies residues 42 to 166 (SGECPSAVSI…FSQSSQRTSR (125 aa)). Residues 122–146 (GFGGGSSGFGSGSGGRSGVSGGGLS) show a composition bias toward gly residues. A disordered region spans residues 122-166 (GFGGGSSGFGSGSGGRSGVSGGGLSSGSSRGGSVRFSQSSQRTSR). Positions 147-166 (SGSSRGGSVRFSQSSQRTSR) are enriched in low complexity.

This sequence belongs to the intermediate filament family. As to quaternary structure, heterotetramer of two type I and two type II keratins.

This chain is Keratin, type II cytoskeletal 68 kDa, component IB, found in Bos taurus (Bovine).